A 143-amino-acid chain; its full sequence is Large-conductance mechanosensitive channel (143 aa).

Transmembrane regions (helical) follow at residues 21–41 (VGVI…ADII), 44–64 (VVGL…LGTV), and 86–106 (GNFI…FMMV).

It belongs to the MscL family. As to quaternary structure, homopentamer.

It localises to the cell inner membrane. Channel that opens in response to stretch forces in the membrane lipid bilayer. May participate in the regulation of osmotic pressure changes within the cell. This chain is Large-conductance mechanosensitive channel, found in Variovorax paradoxus (strain S110).